The primary structure comprises 374 residues: UDP-N-acetylglucosamine--N-acetylmuramyl-(pentapeptide) pyrophosphoryl-undecaprenol N-acetylglucosamine transferase (374 aa).

UDP-N-acetyl-alpha-D-glucosamine contacts are provided by residues 13-15, Asn124, Arg165, Ser193, and Gln294; that span reads TGG.

It belongs to the glycosyltransferase 28 family. MurG subfamily.

It is found in the cell inner membrane. It carries out the reaction di-trans,octa-cis-undecaprenyl diphospho-N-acetyl-alpha-D-muramoyl-L-alanyl-D-glutamyl-meso-2,6-diaminopimeloyl-D-alanyl-D-alanine + UDP-N-acetyl-alpha-D-glucosamine = di-trans,octa-cis-undecaprenyl diphospho-[N-acetyl-alpha-D-glucosaminyl-(1-&gt;4)]-N-acetyl-alpha-D-muramoyl-L-alanyl-D-glutamyl-meso-2,6-diaminopimeloyl-D-alanyl-D-alanine + UDP + H(+). Its pathway is cell wall biogenesis; peptidoglycan biosynthesis. Functionally, cell wall formation. Catalyzes the transfer of a GlcNAc subunit on undecaprenyl-pyrophosphoryl-MurNAc-pentapeptide (lipid intermediate I) to form undecaprenyl-pyrophosphoryl-MurNAc-(pentapeptide)GlcNAc (lipid intermediate II). This Rhizobium rhizogenes (strain K84 / ATCC BAA-868) (Agrobacterium radiobacter) protein is UDP-N-acetylglucosamine--N-acetylmuramyl-(pentapeptide) pyrophosphoryl-undecaprenol N-acetylglucosamine transferase.